A 121-amino-acid polypeptide reads, in one-letter code: Large ribosomal subunit protein uL22 (121 aa).

This sequence belongs to the universal ribosomal protein uL22 family. As to quaternary structure, part of the 50S ribosomal subunit.

Functionally, this protein binds specifically to 23S rRNA; its binding is stimulated by other ribosomal proteins, e.g. L4, L17, and L20. It is important during the early stages of 50S assembly. It makes multiple contacts with different domains of the 23S rRNA in the assembled 50S subunit and ribosome. Its function is as follows. The globular domain of the protein is located near the polypeptide exit tunnel on the outside of the subunit, while an extended beta-hairpin is found that lines the wall of the exit tunnel in the center of the 70S ribosome. The polypeptide is Large ribosomal subunit protein uL22 (Hydrogenobaculum sp. (strain Y04AAS1)).